Consider the following 197-residue polypeptide: MDNNRIGEVQRKTSETEVLLQVELDGTGNHQIDTEIPFLNHMLTLFSFHSLCNLRVTARGDVEVDDHHSVEDIAICLGQALKMALGDKRGITRYGEATVPMDESLARVVLDLSGRSYLVYNVPMEREMIGNFATENVREFFQAVAANAGINIHIDLLRGSNTHHIIEAVFKAFARALKDAIEIEPRMEGIWSSKRVL.

This sequence belongs to the imidazoleglycerol-phosphate dehydratase family.

It is found in the cytoplasm. The enzyme catalyses D-erythro-1-(imidazol-4-yl)glycerol 3-phosphate = 3-(imidazol-4-yl)-2-oxopropyl phosphate + H2O. It functions in the pathway amino-acid biosynthesis; L-histidine biosynthesis; L-histidine from 5-phospho-alpha-D-ribose 1-diphosphate: step 6/9. The polypeptide is Imidazoleglycerol-phosphate dehydratase (Syntrophomonas wolfei subsp. wolfei (strain DSM 2245B / Goettingen)).